We begin with the raw amino-acid sequence, 382 residues long: uncharacterized protein (382 aa).

A run of 10 helical transmembrane segments spans residues 8 to 28 (VLLL…LNTL), 41 to 61 (WQVG…TLIA), 73 to 93 (SYHC…LTVD), 94 to 114 (FWSW…IWVI), 133 to 153 (AAYM…LGIV), 157 to 177 (LLSV…PLLF), 208 to 228 (GCII…LYLS), 274 to 294 (VVIL…ALFI), 325 to 345 (ALLM…SLLM), and 349 to 369 (SDNL…MMLL).

It belongs to the major facilitator superfamily. YcaD (TC 2.A.1.26) family.

The protein localises to the cell inner membrane. This is an uncharacterized protein from Yersinia pseudotuberculosis serotype O:3 (strain YPIII).